Consider the following 487-residue polypeptide: MAEVTNCAAIVLAAGAGTRMKSSTQKTLHEIGGRSLLGHALHAAAGLNPEHLVVVVGHQRDQVSPAVDAISEELDCAVSQAVQEEQNGTGHAVQCGLSALPEFDGTVIVTNGDVPLLRPETLRQLHEAHTGEANAVTVLSMTLEDPTGYGRVLRADDGSVTAIVEQKDASEEQRKVREVNSGVFAFDGAVLRDALTKLNSDNAQGELYITDVLEIAREAGHRVGAHVAADPEELSGVNDRVQLAAAGRLLNRRMVEEAMRGGTTIVDPDTTWIGVNVTIGQDVVIHPNTQLWGATTIADGAEVGPDTTLTNIQVGAGASVVRTHGFDSVIGSNAQIGPFTYIRPGVIVGEEGKLGGFVEAKKTQIGRGTKVPHLTYIGDATVGDYSNIGASSVFVNYDGVNKHHTTIGSHVRTGSDTMFIAPVTVGDGAYSGAGTVIKDDVPPGALAVSGGKQRNIEGWVQKKRPGTPAAEAAGKAQDAKANDQTTN.

Residues 1–240 form a pyrophosphorylase region; the sequence is MAEVTNCAAI…PEELSGVNDR (240 aa). Residues 12–15, Lys-26, Gln-83, and 88–89 contribute to the UDP-N-acetyl-alpha-D-glucosamine site; these read LAAG and GT. Mg(2+) is bound at residue Asp-113. Positions 150, 165, 180, and 238 each coordinate UDP-N-acetyl-alpha-D-glucosamine. Mg(2+) is bound at residue Asn-238. The segment at 241-261 is linker; that stretch reads VQLAAAGRLLNRRMVEEAMRG. Residues 262–487 form an N-acetyltransferase region; it reads GTTIVDPDTT…DAKANDQTTN (226 aa). 2 residues coordinate UDP-N-acetyl-alpha-D-glucosamine: Arg-343 and Lys-361. Residue His-373 is the Proton acceptor of the active site. 2 residues coordinate UDP-N-acetyl-alpha-D-glucosamine: Tyr-376 and Asn-387. Acetyl-CoA is bound by residues Ala-390, 396–397, Ser-415, and Ala-433; that span reads NY. Positions 449 to 487 are disordered; the sequence is SGGKQRNIEGWVQKKRPGTPAAEAAGKAQDAKANDQTTN.

The protein in the N-terminal section; belongs to the N-acetylglucosamine-1-phosphate uridyltransferase family. In the C-terminal section; belongs to the transferase hexapeptide repeat family. As to quaternary structure, homotrimer. Requires Mg(2+) as cofactor.

It localises to the cytoplasm. It catalyses the reaction alpha-D-glucosamine 1-phosphate + acetyl-CoA = N-acetyl-alpha-D-glucosamine 1-phosphate + CoA + H(+). The enzyme catalyses N-acetyl-alpha-D-glucosamine 1-phosphate + UTP + H(+) = UDP-N-acetyl-alpha-D-glucosamine + diphosphate. It functions in the pathway nucleotide-sugar biosynthesis; UDP-N-acetyl-alpha-D-glucosamine biosynthesis; N-acetyl-alpha-D-glucosamine 1-phosphate from alpha-D-glucosamine 6-phosphate (route II): step 2/2. It participates in nucleotide-sugar biosynthesis; UDP-N-acetyl-alpha-D-glucosamine biosynthesis; UDP-N-acetyl-alpha-D-glucosamine from N-acetyl-alpha-D-glucosamine 1-phosphate: step 1/1. Its pathway is bacterial outer membrane biogenesis; LPS lipid A biosynthesis. Functionally, catalyzes the last two sequential reactions in the de novo biosynthetic pathway for UDP-N-acetylglucosamine (UDP-GlcNAc). The C-terminal domain catalyzes the transfer of acetyl group from acetyl coenzyme A to glucosamine-1-phosphate (GlcN-1-P) to produce N-acetylglucosamine-1-phosphate (GlcNAc-1-P), which is converted into UDP-GlcNAc by the transfer of uridine 5-monophosphate (from uridine 5-triphosphate), a reaction catalyzed by the N-terminal domain. The sequence is that of Bifunctional protein GlmU from Corynebacterium aurimucosum (strain ATCC 700975 / DSM 44827 / CIP 107346 / CN-1) (Corynebacterium nigricans).